The primary structure comprises 162 residues: Mitochondrial fission process protein 1 (162 aa).

Transmembrane regions (helical) follow at residues 36–56 (SLVKPVVVKFSYVVAFGYVAA), 81–101 (AIIAVDTVLWQTFASVLIPGF), and 128–148 (TVTALGLATIPFIVHPIDAFV).

Belongs to the MTFP1 family.

Its subcellular location is the mitochondrion inner membrane. In terms of biological role, involved in the mitochondrial division probably by regulating membrane fission. Loss-of-function leads to apoptosis. This chain is Mitochondrial fission process protein 1, found in Caenorhabditis briggsae.